A 286-amino-acid polypeptide reads, in one-letter code: MKFGCVQFFPKLGKVNENIVHLRQLLDQHSEALQSVKLLVFPEMCLTGYNFKNSESIQPFLENVTSNHCPSIQFAQEVSEQYRCYTIIGFPEFQNSNGISTLYNSTALISPKKELLNVYHKHFLFETDKSWATEGKGFSFEPCIPELGPISMAICMDINPYDFKAPFEKFEYANFILRELEHQQMVSSNVSRPIICLSMAWLVSDDKVIDASLPDIKNLHYWTTRLSPLINSNTDAIVLVANRWGKENDLNFSGTSCIMELSQGRAILHGVLKAAENGIVVGELEK.

One can recognise a CN hydrolase domain in the interval 1–286 (MKFGCVQFFP…NGIVVGELEK (286 aa)). The active-site Proton acceptor is Glu-43. Lys-121 serves as the catalytic Proton donor. Residue Cys-155 is the Nucleophile of the active site.

This sequence belongs to the carbon-nitrogen hydrolase superfamily.

It localises to the cytoplasm. Its subcellular location is the nucleus. Its function is as follows. Deamidates N-terminal Asn and Gln. Component of a targeting complex in the N-end rule pathway. This Schizosaccharomyces pombe (strain 972 / ATCC 24843) (Fission yeast) protein is Protein N-terminal amidase (nta1).